A 134-amino-acid polypeptide reads, in one-letter code: Arsenate reductase (134 aa).

Active-site nucleophile residues include C11, C83, and C90. Intrachain disulfides connect C11-C83 and C83-C90.

It belongs to the low molecular weight phosphotyrosine protein phosphatase family. Thioredoxin-coupled ArsC subfamily.

It is found in the cytoplasm. The enzyme catalyses arsenate + [thioredoxin]-dithiol + H(+) = arsenite + [thioredoxin]-disulfide + H2O. In terms of biological role, catalyzes the reduction of arsenate [As(V)] to arsenite [As(III)]. The chain is Arsenate reductase from Bacillus cereus (strain AH187).